A 64-amino-acid polypeptide reads, in one-letter code: Large ribosomal subunit protein uL30 (64 aa).

Residues 1 to 22 (MSEQVKRVRVTQVGSPIGRKPG) are disordered.

It belongs to the universal ribosomal protein uL30 family. As to quaternary structure, part of the 50S ribosomal subunit.

This chain is Large ribosomal subunit protein uL30, found in Acidiphilium cryptum (strain JF-5).